The sequence spans 235 residues: Casparian strip membrane protein 2 (235 aa).

Residues 1–46 (MSGSDTSGSVHVDEHGHGKASSSYDGAGAPAPAPAPFQGHRKAGSG) are disordered. Residues 1-67 (MSGSDTSGSV…GSGGDGLRRC (67 aa)) are Cytoplasmic-facing. The chain crosses the membrane as a helical span at residues 68–88 (LGLIDFVLRVAAFGPTLAAAI). The Extracellular portion of the chain corresponds to 89–115 (SIGTSDERLSVFTNYFQFRARFDDFPA). The chain crosses the membrane as a helical span at residues 116–136 (FEFFIVANAIAAGYMVLSLPF). Topologically, residues 137–150 (SAATIMSSKATGVK) are cytoplasmic. A helical membrane pass occupies residues 151–171 (LLLLICDTIMVGLLTAAASAA). Topologically, residues 172 to 203 (AAMVYVAHEGNLRANWVPICLQFHGFCQRTSG) are extracellular. The helical transmembrane segment at 204–224 (AVIASFLAVFVLMVLIVMAAF) threads the bilayer. The Cytoplasmic portion of the chain corresponds to 225-235 (TMPRRTHHTAS).

Belongs to the Casparian strip membrane proteins (CASP) family. Homodimer and heterodimers.

It is found in the cell membrane. Its function is as follows. Regulates membrane-cell wall junctions and localized cell wall deposition. Required for establishment of the Casparian strip membrane domain (CSD) and the subsequent formation of Casparian strips, a cell wall modification of the root endodermis that determines an apoplastic barrier between the intraorganismal apoplasm and the extraorganismal apoplasm and prevents lateral diffusion. In Oryza sativa subsp. indica (Rice), this protein is Casparian strip membrane protein 2.